The following is a 209-amino-acid chain: High frequency lysogenization protein HflD homolog (209 aa).

The protein belongs to the HflD family.

It is found in the cytoplasm. Its subcellular location is the cell inner membrane. This is High frequency lysogenization protein HflD homolog from Sodalis glossinidius (strain morsitans).